Consider the following 289-residue polypeptide: MDQLDQLSDYFPPPLPVGQTLFDWGKRTYVMGILNTTPDSFSDGGEFNSLPTAIHQAKTMVQGGAHIIDIGGQSTRPGAETVSLKEELERTIPIIQALRQELDIPISIDTTRAEVARQALQAGADMVNDISGATFEPEILAVAAQHKAPIILMHIRGNPQTMQNLTDYGDLIGEMRQFFSAQVDLARHYGVLPEQIILDPGIGFAKTAEQNITLLRQLPELKRLGFPLLVGPSRKSFIGKILDQPDPKERVWGTGATCCRAIAGGADIVRVHDVEAMAQICKVADALWR.

One can recognise a Pterin-binding domain in the interval 28–282 (TYVMGILNTT…DVEAMAQICK (255 aa)). Asn-35 contacts Mg(2+). Residues Thr-75, Asp-109, Asn-128, Asp-199, Lys-235, and 270–272 (RVH) each bind (7,8-dihydropterin-6-yl)methyl diphosphate.

Belongs to the DHPS family. The cofactor is Mg(2+).

The catalysed reaction is (7,8-dihydropterin-6-yl)methyl diphosphate + 4-aminobenzoate = 7,8-dihydropteroate + diphosphate. It participates in cofactor biosynthesis; tetrahydrofolate biosynthesis; 7,8-dihydrofolate from 2-amino-4-hydroxy-6-hydroxymethyl-7,8-dihydropteridine diphosphate and 4-aminobenzoate: step 1/2. In terms of biological role, catalyzes the condensation of para-aminobenzoate (pABA) with 6-hydroxymethyl-7,8-dihydropterin diphosphate (DHPt-PP) to form 7,8-dihydropteroate (H2Pte), the immediate precursor of folate derivatives. The chain is Dihydropteroate synthase (folP) from Synechocystis sp. (strain ATCC 27184 / PCC 6803 / Kazusa).